We begin with the raw amino-acid sequence, 328 residues long: MSEKIRVLLYYKYVSIENAQEYAAKHLEFCKSIGLKGRILIADEGINGTVSGDYETTQKYMDWVHSDERFADLWFKIDEENQQAFRKMFVRYKKEIVHLGLEDNNFDSDINPLETTGEYLNPKQFKEALLDEDTVVLDTRNDYEYDLGHFRGAIRPDIRNFRELPQWVRDNKDKFMEKRVVVYCTGGVRCEKFSGWMVREGFKDVGQLHGGIATYGKDPEVQGELWDGAMYVFDDRISVPINHVNPTVVSKDYFDGTPCERYVNCANPFCNKQIFASEENETKYVRGCSPECRAHERNRYVQENGLSRQEWAERLEAIGESLPEFVGA.

Residues 130–224 (LDEDTVVLDT…YGKDPEVQGE (95 aa)) form the Rhodanese domain. The active-site Cysteine persulfide intermediate is Cys184.

The protein belongs to the TrhO family.

It carries out the reaction uridine(34) in tRNA + AH2 + O2 = 5-hydroxyuridine(34) in tRNA + A + H2O. In terms of biological role, catalyzes oxygen-dependent 5-hydroxyuridine (ho5U) modification at position 34 in tRNAs. The chain is tRNA uridine(34) hydroxylase from Streptococcus pyogenes serotype M3 (strain SSI-1).